A 376-amino-acid chain; its full sequence is Chaperone protein DnaJ (376 aa).

Positions 5–70 (DYYEVLGVAK…QKRAAYDQYG (66 aa)) constitute a J domain. Residues 136-214 (GYDTQIRVPS…CHGSGKVKET (79 aa)) form a CR-type zinc finger. Zn(2+) contacts are provided by cysteine 149, cysteine 152, cysteine 166, cysteine 169, cysteine 188, cysteine 191, cysteine 202, and cysteine 205. 4 CXXCXGXG motif repeats span residues 149 to 156 (CGVCHGSG), 166 to 173 (CPTCHGQG), 188 to 195 (CPKCHGTG), and 202 to 209 (CVHCHGSG).

This sequence belongs to the DnaJ family. As to quaternary structure, homodimer. The cofactor is Zn(2+).

It is found in the cytoplasm. In terms of biological role, participates actively in the response to hyperosmotic and heat shock by preventing the aggregation of stress-denatured proteins and by disaggregating proteins, also in an autonomous, DnaK-independent fashion. Unfolded proteins bind initially to DnaJ; upon interaction with the DnaJ-bound protein, DnaK hydrolyzes its bound ATP, resulting in the formation of a stable complex. GrpE releases ADP from DnaK; ATP binding to DnaK triggers the release of the substrate protein, thus completing the reaction cycle. Several rounds of ATP-dependent interactions between DnaJ, DnaK and GrpE are required for fully efficient folding. Also involved, together with DnaK and GrpE, in the DNA replication of plasmids through activation of initiation proteins. This chain is Chaperone protein DnaJ, found in Burkholderia pseudomallei (strain 1710b).